A 657-amino-acid polypeptide reads, in one-letter code: tRNA 5-methylaminomethyl-2-thiouridine biosynthesis bifunctional protein MnmC (657 aa).

Residues 1 to 236 (MPDRLVPATL…KRAMLVGEYA (236 aa)) form a tRNA (mnm(5)s(2)U34)-methyltransferase region. The tract at residues 261–657 (IGAGVAGCAV…LRARQVSAAD (397 aa)) is FAD-dependent cmnm(5)s(2)U34 oxidoreductase.

This sequence in the N-terminal section; belongs to the methyltransferase superfamily. tRNA (mnm(5)s(2)U34)-methyltransferase family. The protein in the C-terminal section; belongs to the DAO family. It depends on FAD as a cofactor.

The protein resides in the cytoplasm. It catalyses the reaction 5-aminomethyl-2-thiouridine(34) in tRNA + S-adenosyl-L-methionine = 5-methylaminomethyl-2-thiouridine(34) in tRNA + S-adenosyl-L-homocysteine + H(+). Catalyzes the last two steps in the biosynthesis of 5-methylaminomethyl-2-thiouridine (mnm(5)s(2)U) at the wobble position (U34) in tRNA. Catalyzes the FAD-dependent demodification of cmnm(5)s(2)U34 to nm(5)s(2)U34, followed by the transfer of a methyl group from S-adenosyl-L-methionine to nm(5)s(2)U34, to form mnm(5)s(2)U34. The chain is tRNA 5-methylaminomethyl-2-thiouridine biosynthesis bifunctional protein MnmC from Burkholderia multivorans (strain ATCC 17616 / 249).